A 209-amino-acid chain; its full sequence is Potassium-transporting ATPase KdpC subunit (209 aa).

Residues 10–30 (VISLVFLFVLGFLFPTVTSLI) form a helical membrane-spanning segment.

This sequence belongs to the KdpC family. As to quaternary structure, the system is composed of three essential subunits: KdpA, KdpB and KdpC.

The protein resides in the cell membrane. Its function is as follows. Part of the high-affinity ATP-driven potassium transport (or Kdp) system, which catalyzes the hydrolysis of ATP coupled with the electrogenic transport of potassium into the cytoplasm. This subunit acts as a catalytic chaperone that increases the ATP-binding affinity of the ATP-hydrolyzing subunit KdpB by the formation of a transient KdpB/KdpC/ATP ternary complex. This Thermoplasma volcanium (strain ATCC 51530 / DSM 4299 / JCM 9571 / NBRC 15438 / GSS1) protein is Potassium-transporting ATPase KdpC subunit.